The following is a 243-amino-acid chain: Leucyl/phenylalanyl-tRNA--protein transferase (243 aa).

A disordered region spans residues 1 to 22 (MHSQPYLLSPTPNTPFPPAEHA).

This sequence belongs to the L/F-transferase family.

Its subcellular location is the cytoplasm. It carries out the reaction N-terminal L-lysyl-[protein] + L-leucyl-tRNA(Leu) = N-terminal L-leucyl-L-lysyl-[protein] + tRNA(Leu) + H(+). The enzyme catalyses N-terminal L-arginyl-[protein] + L-leucyl-tRNA(Leu) = N-terminal L-leucyl-L-arginyl-[protein] + tRNA(Leu) + H(+). The catalysed reaction is L-phenylalanyl-tRNA(Phe) + an N-terminal L-alpha-aminoacyl-[protein] = an N-terminal L-phenylalanyl-L-alpha-aminoacyl-[protein] + tRNA(Phe). Its function is as follows. Functions in the N-end rule pathway of protein degradation where it conjugates Leu, Phe and, less efficiently, Met from aminoacyl-tRNAs to the N-termini of proteins containing an N-terminal arginine or lysine. This chain is Leucyl/phenylalanyl-tRNA--protein transferase, found in Xylella fastidiosa (strain M23).